The primary structure comprises 303 residues: MYYGFDIGGTKIALGAFDSTRRLQWEKRVPTPHTSYSAFLDAVCELVAEADQRFGVKGSVGIGIPGMPETEDGTLYAANVPAASGKPLRADLSARLDRDVRLDNDANCFALSEAWDDEFTQYPLVMGLILGTGVGGGLVLNGKPITGQSYITGEFGHMRLPVDALTLMGFDFPLRRCGCGQMGCIENYLSGRGFAWLYQHYYDQSLQAPEIIALWEQGDEQAHAHVERYLDLLAVCLGNILTIVDPDLLVIGGGLSNFTAITTQLAERLPRHLLPVARAPRIERARHGDAGGMRGAAFLHLTD.

ATP contacts are provided by residues 4–11 (GFDIGGTK) and 133–140 (GVGGGLVL). Positions 157, 177, 179, and 184 each coordinate Zn(2+).

It belongs to the ROK (NagC/XylR) family. NagK subfamily.

It carries out the reaction N-acetyl-D-glucosamine + ATP = N-acetyl-D-glucosamine 6-phosphate + ADP + H(+). It participates in cell wall biogenesis; peptidoglycan recycling. Its function is as follows. Catalyzes the phosphorylation of N-acetyl-D-glucosamine (GlcNAc) derived from cell-wall degradation, yielding GlcNAc-6-P. This chain is N-acetyl-D-glucosamine kinase, found in Salmonella choleraesuis (strain SC-B67).